The following is a 430-amino-acid chain: Adenylosuccinate synthetase (430 aa).

GTP is bound by residues glycine 12–lysine 18 and glycine 40–threonine 42. Aspartate 13 serves as the catalytic Proton acceptor. Positions 13 and 40 each coordinate Mg(2+). Residues aspartate 13 to lysine 16, asparagine 38 to histidine 41, threonine 130, arginine 144, glutamine 224, threonine 239, and arginine 303 contribute to the IMP site. Catalysis depends on histidine 41, which acts as the Proton donor. Valine 299–arginine 305 provides a ligand contact to substrate. GTP-binding positions include arginine 305, lysine 331–aspartate 333, and serine 413–serine 415.

Belongs to the adenylosuccinate synthetase family. Homodimer. It depends on Mg(2+) as a cofactor.

Its subcellular location is the cytoplasm. It catalyses the reaction IMP + L-aspartate + GTP = N(6)-(1,2-dicarboxyethyl)-AMP + GDP + phosphate + 2 H(+). It functions in the pathway purine metabolism; AMP biosynthesis via de novo pathway; AMP from IMP: step 1/2. Its function is as follows. Plays an important role in the de novo pathway of purine nucleotide biosynthesis. Catalyzes the first committed step in the biosynthesis of AMP from IMP. This is Adenylosuccinate synthetase from Rhodopseudomonas palustris (strain BisB18).